Consider the following 427-residue polypeptide: GTPase Obg (427 aa).

Positions 1-158 (MFVDKVKVYV…RDVILELKVL (158 aa)) constitute an Obg domain. Residues 118 to 144 (KGGRGGRGNTRFATPANPAPELSENGE) are disordered. One can recognise an OBG-type G domain in the interval 159 to 329 (ADAGLVGFPS…LLRAIMDTIE (171 aa)). GTP contacts are provided by residues 165–172 (GFPSVGKS), 190–194 (FTTIT), 212–215 (DLPG), 282–285 (NKMD), and 310–312 (SAL). Mg(2+) contacts are provided by S172 and T192. The region spanning 349 to 427 (KHDKEQDPFV…LLEFEFEFIE (79 aa)) is the OCT domain.

This sequence belongs to the TRAFAC class OBG-HflX-like GTPase superfamily. OBG GTPase family. Monomer. Mg(2+) is required as a cofactor.

It is found in the cytoplasm. In terms of biological role, an essential GTPase which binds GTP, GDP and possibly (p)ppGpp with moderate affinity, with high nucleotide exchange rates and a fairly low GTP hydrolysis rate. Plays a role in control of the cell cycle, stress response, ribosome biogenesis and in those bacteria that undergo differentiation, in morphogenesis control. The sequence is that of GTPase Obg from Halalkalibacterium halodurans (strain ATCC BAA-125 / DSM 18197 / FERM 7344 / JCM 9153 / C-125) (Bacillus halodurans).